We begin with the raw amino-acid sequence, 523 residues long: Sialate O-acetylesterase (523 aa).

A signal peptide spans 1-23; it reads MVAPGLVLGLVLPLILWADRSAG. N-linked (GlcNAc...) asparagine glycans are attached at residues Asn-107, Asn-138, Asn-267, Asn-290, Asn-401, and Asn-422.

The protein resides in the lysosome. It carries out the reaction N-acetyl-9-O-acetylneuraminate + H2O = N-acetylneuraminate + acetate + H(+). The catalysed reaction is an Ac-O-9-sialoglycoconjugate + H2O = a sialoglycoconjugate + acetate + H(+). Its function is as follows. Catalyzes the removal of O-acetyl ester groups from position 9 of the free diacetylated sialate N-acetyl-9-O-acetylneuraminate (Neu5,9Ac2) in the cytosol and of the diacetylated sialate residues of sialylglycoconjugates in the lysosomes. Together with the sialate-O-acetyltransferase they regulate the balance of acetylated sialoglycoconjugates, key players in various processes such as cell-cell interactions, host-pathogen recognition, and tumor antigenicity. In Pongo abelii (Sumatran orangutan), this protein is Sialate O-acetylesterase (SIAE).